We begin with the raw amino-acid sequence, 353 residues long: Melatonin receptor type 1A (353 aa).

Residues Met-1–Ala-15 are compositionally biased toward polar residues. The tract at residues Met-1–Gly-23 is disordered. Residues Met-1–Thr-32 lie on the Extracellular side of the membrane. N-linked (GlcNAc...) asparagine glycans are attached at residues Asn-4 and Asn-10. Residues Leu-33–Leu-53 traverse the membrane as a helical segment. Residues Ser-54 to Asn-66 are Cytoplasmic-facing. The chain crosses the membrane as a helical span at residues Ile-67–Val-87. At Leu-88–Ile-105 the chain is on the extracellular side. A disulfide bridge links Cys-103 with Cys-180. A helical membrane pass occupies residues Ser-106–Ile-126. Residues Asn-127–Ser-147 are Cytoplasmic-facing. A helical membrane pass occupies residues Leu-148 to Thr-168. The Extracellular segment spans residues Gly-169–Tyr-190. A helical membrane pass occupies residues Thr-191–Leu-211. Residues Arg-212–Met-243 are Cytoplasmic-facing. The helical transmembrane segment at Phe-244–Val-264 threads the bilayer. The Extracellular portion of the chain corresponds to Ala-265–Glu-277. The helical transmembrane segment at Trp-278–Tyr-298 threads the bilayer. Topologically, residues Gly-299–Val-353 are cytoplasmic.

This sequence belongs to the G-protein coupled receptor 1 family. At least in the brain, more precisely in the pars tuberalis and the suprachiasmatic nucleus.

It localises to the cell membrane. In terms of biological role, high affinity receptor for melatonin. Likely to mediate the reproductive and circadian actions of melatonin. The activity of this receptor is mediated by pertussis toxin sensitive G proteins that inhibit adenylate cyclase activity. Possibly involved in sleep induction, by melatonin activation of the potassium channel KCNMA1/BK and the dissociation of G-beta and G-gamma subunits, thereby decreasing synaptic transmission. The protein is Melatonin receptor type 1A (MTNR1A) of Phodopus sungorus (Striped hairy-footed hamster).